The following is a 435-amino-acid chain: Protein CHLOROPLAST IMPORT APPARATUS 2 (435 aa).

A chloroplast-targeting transit peptide spans 1–59 (MSACLSSGGGGAAAYSFELEKVKSPPPSSSTTTTRATSPSSTISESSNSPLAISTRKPR). Disordered regions lie at residues 21–66 (KVKS…KRPN) and 412–435 (ADQR…SGQR). A compositionally biased stretch (low complexity) spans 29–49 (SSTTTTRATSPSSTISESSNS). Positions 56 to 65 (RKPRTQRKRP) are enriched in basic residues. Residues 383–425 (REASVLRYKEKRRTRLFSKKIRYQVRKLNADQRPRMKGRFVRR) form the CCT domain.

In terms of tissue distribution, expressed in leaves and young flower buds.

The protein localises to the plastid. It localises to the chloroplast. Its subcellular location is the nucleus. In terms of biological role, responsible for specific up-regulation of the translocon genes TOC33 and TOC75 in leaves. Involved in the general chloroplast protein import pathway regulation, including protein import and protein translation efficiencies. This Arabidopsis thaliana (Mouse-ear cress) protein is Protein CHLOROPLAST IMPORT APPARATUS 2 (CIA2).